Here is a 198-residue protein sequence, read N- to C-terminus: Protein hunchback (198 aa).

Disordered stretches follow at residues 16–116 (SHHH…NPMQ) and 158–198 (LTPP…KYMA). Residues 17 to 31 (HHHHHHHAHHSHHQH) show a composition bias toward basic residues. Low complexity-rich tracts occupy residues 35–46 (SNSNSNASSPHQ) and 68–83 (QQQQQQQQQQQQQQQQ). Residues 95–105 (PSPSNNDQNSP) show a composition bias toward polar residues. Residues 179-198 (EPEKEHDLMSNSSEDMKYMA) show a composition bias toward basic and acidic residues.

Belongs to the hunchback C2H2-type zinc-finger protein family.

Its subcellular location is the nucleus. In terms of biological role, gap class segmentation protein that controls development of head structures. This Drosophila cyrtoloma (Fruit fly) protein is Protein hunchback (hb).